The sequence spans 602 residues: Beta-(1--&gt;2)glucan export ATP-binding/permease protein NdvA (602 aa).

Residues 21-311 (GWVLAGANLL…VVGFVNSVFM (291 aa)) form the ABC transmembrane type-1 domain. A run of 6 helical transmembrane segments spans residues 22 to 42 (WVLAGANLLLAAAQFAEPVLF), 68 to 88 (LLLAWAVFGLFTIGCGAAVAL), 146 to 166 (EHFAALMSLVVLLPLSIYINW), 167 to 187 (RLALLLFALCVVFTVLTTLVV), 238 to 258 (LLAMQMPVLSWWALVTVITRA), and 285 to 305 (IVMFVSFATMLIQKLEQVVGF). An ABC transporter domain is found at 345–579 (VEFDNVSFSY…RGYFAELAHA (235 aa)). Position 378 to 385 (378 to 385 (GATGAGKS)) interacts with ATP.

This sequence belongs to the ABC transporter superfamily. Beta-(1--&gt;2)glucan exporter (TC 3.A.1.108.1) family. Homodimer.

The protein localises to the cell inner membrane. It carries out the reaction [(1-&gt;2)-beta-D-glucosyl](n)(in) + ATP + H2O = [(1-&gt;2)-beta-D-glucosyl](n)(out) + ADP + phosphate + H(+). In terms of biological role, involved in Beta-(1--&gt;2)glucan export. Transmembrane domains (TMD) form a pore in the inner membrane and the ATP-binding domain (NBD) is responsible for energy generation. The sequence is that of Beta-(1--&gt;2)glucan export ATP-binding/permease protein NdvA from Rhodopseudomonas palustris (strain BisA53).